Here is a 524-residue protein sequence, read N- to C-terminus: Na(+)/H(+) antiporter NhaB (524 aa).

Transmembrane regions (helical) follow at residues 23–43, 44–64, 97–117, 120–140, 144–164, 203–223, 236–256, 304–324, 354–374, 392–412, 448–468, and 476–496; these read IAIL…PFYA, GWLL…CYPL, LLLI…LFVF, LLLN…AAAF, FLDA…FYGI, LLMH…VGEP, FVSF…CGIL, ALVG…VGLI, FTAL…QHLF, LFYL…VGTV, ATPN…APLI, and VWMA…CVIF.

The protein belongs to the NhaB Na(+)/H(+) (TC 2.A.34) antiporter family.

It localises to the cell inner membrane. The catalysed reaction is 2 Na(+)(in) + 3 H(+)(out) = 2 Na(+)(out) + 3 H(+)(in). Functionally, na(+)/H(+) antiporter that extrudes sodium in exchange for external protons. The protein is Na(+)/H(+) antiporter NhaB of Edwardsiella ictaluri (strain 93-146).